A 282-amino-acid chain; its full sequence is uncharacterized protein (282 aa).

2 disordered regions span residues 1–45 (MPLE…EEDE) and 201–259 (DRRR…KPWG). Residues 10 to 19 (SEMKEFKEST) show a composition bias toward basic and acidic residues. Positions 26–38 (SVSSEETLTQSMV) are enriched in polar residues. A compositionally biased stretch (basic and acidic residues) spans 201-237 (DRRRKEDSKARSRLTRREEHSEHHRSGKSRRERERRS).

This is an uncharacterized protein from Ostreid herpesvirus 1 (isolate France) (OsHV-1).